We begin with the raw amino-acid sequence, 41 residues long: Large ribosomal subunit protein bL36 (41 aa).

Belongs to the bacterial ribosomal protein bL36 family.

The polypeptide is Large ribosomal subunit protein bL36 (Gluconacetobacter diazotrophicus (strain ATCC 49037 / DSM 5601 / CCUG 37298 / CIP 103539 / LMG 7603 / PAl5)).